Consider the following 59-residue polypeptide: Protein QUA-QUINE STARCH (59 aa).

Expressed in hypocotyls, leaves, vasculature, hydathodes, trichomes, pedicels, sepals, filaments, mature pollen, stigma papillae, styles, siliques, root and shoot tips, but not in shoot meristem, petals or root epidermis.

The protein resides in the cytoplasm. In terms of biological role, involved in regulating carbon and nitrogen allocation to starch and protein. The polypeptide is Protein QUA-QUINE STARCH (Arabidopsis thaliana (Mouse-ear cress)).